Consider the following 365-residue polypeptide: Regulatory protein RapG (365 aa).

5 TPR repeats span residues 135–168 (GKLY…KKKL), 169–202 (ASAL…TSEL), 209–242 (AQLL…DEYA), 244–284 (SAYY…EPNR), and 326–359 (RELS…EELI).

Belongs to the Rap family.

The protein resides in the cytoplasm. Its activity is regulated as follows. Inhibited by PhrG. Involved in the regulation of expression of DegU-controlled genes. Inhibits the binding of DegU to the promoter regions of aprE, coding for an extracellular alkaline protease, and comK, a master regulator for development of genetic competence. RapG does not stimulate dephosphorylation of DegU-P. In Bacillus subtilis (strain 168), this protein is Regulatory protein RapG (rapG).